The primary structure comprises 1481 residues: Cystic fibrosis transmembrane conductance regulator (1481 aa).

The Cytoplasmic portion of the chain corresponds to 1–77 (MQRSPLEKAS…KLINALRRCF (77 aa)). Residues 78 to 98 (FWRFTFYGILLYLGEVTKAVQ) traverse the membrane as a helical segment. Positions 81 to 365 (FTFYGILLYL…WAVQTWYDSL (285 aa)) constitute an ABC transmembrane type-1 1 domain. Residues 99 to 122 (PLLLGRIIASYDPDNKTERSIAIY) lie on the Extracellular side of the membrane. The chain crosses the membrane as a helical span at residues 123-146 (LGIGLCLLFIVRTLLLHPAIFGLH). Topologically, residues 147–195 (HIGMQMRIAMFSLIYKKTLKLSSRVLDKISIGQLVSLLSNNLNKFDEGL) are cytoplasmic. Residues 196 to 216 (ALAHFVWIAPLQVALLMGLIW) form a helical membrane-spanning segment. At 217-222 (ELLQAS) the chain is on the extracellular side. Residues 223–243 (AFCGLGFLIVLALFQAGLGRM) form a helical membrane-spanning segment. Residues 244–298 (MMKYRDQRAGKINERLVITSEMIENIQSVKAYCWEEAMEKMIENLRQTELKLTRK) are Cytoplasmic-facing. The helical transmembrane segment at 299–319 (AAYVRYFNSSAFFFSGFFVVF) threads the bilayer. The Extracellular portion of the chain corresponds to 320–339 (LSVLPYALIKGIILRKIFTT). A helical transmembrane segment spans residues 340-358 (ISFCIVLRMAVTRQFPWAV). The Cytoplasmic segment spans residues 359–858 (QTWYDSLGAI…YLRYITLHKS (500 aa)). ATP is bound by residues Trp401, Ser434, 458–465 (GSTGAGKT), and Gln493. The 224-residue stretch at 423–646 (NDDNNLFFSN…RPDFSSKLMG (224 aa)) folds into the ABC transporter 1 domain. Residue Cys524 is the site of S-palmitoyl cysteine attachment. A phosphoserine mark is found at Ser549 and Ser660. Positions 654 to 831 (SSERRNSILT…EEINEEDLKE (178 aa)) are disordered R region. Phosphoserine; by PKA is present on Ser670. Residue Ser686 is modified to Phosphoserine. Lys688 participates in a covalent cross-link: Glycyl lysine isopeptide (Lys-Gly) (interchain with G-Cter in ubiquitin). A phosphoserine mark is found at Ser700 and Ser712. Thr717 is subject to Phosphothreonine. 6 positions are modified to phosphoserine: Ser737, Ser753, Ser768, Ser790, Ser795, and Ser813. Residues 859 to 879 (LIFVLIWCLVIFLAEVAASLV) traverse the membrane as a helical segment. Residues 859-1155 (LIFVLIWCLV…AVNSSIDVDS (297 aa)) enclose the ABC transmembrane type-1 2 domain. Over 880 to 918 (VLWLLRNTPFQDKGNSTYSRNNSYAVIITNTSSYYVFYI) the chain is Extracellular. 3 N-linked (GlcNAc...) asparagine glycosylation sites follow: Asn894, Asn900, and Asn909. Residues 919 to 939 (YVGVADTLLALGFFRGLPLVH) traverse the membrane as a discontinuously helical segment. Topologically, residues 940 to 990 (TLITVSKILHHKMLHSVLQAPMSTLNTLKAGGILNRFSKDIAILDDLLPLT) are cytoplasmic. Residues 991 to 1011 (IFDFIQLLLIVIGAIAVVSVL) form a helical membrane-spanning segment. Topologically, residues 1012–1013 (QP) are extracellular. The chain crosses the membrane as a helical span at residues 1014–1034 (YIFLATVPVIAAFVLLRAYFL). Topologically, residues 1035-1095 (QTSQQLKQLE…TANWFLYLST (61 aa)) are cytoplasmic. A helical membrane pass occupies residues 1096–1116 (LRWFQMRIEMIFVIFFIAVTF). Residues 1117 to 1130 (ISILTTGEGEGTVG) lie on the Extracellular side of the membrane. A helical membrane pass occupies residues 1131-1151 (IILTLAMNIMSTLQWAVNSSI). Residues 1152–1481 (DVDSLMRSVS…TEEEVQETRL (330 aa)) are Cytoplasmic-facing. One can recognise an ABC transporter 2 domain in the interval 1211-1444 (MTIKDLTAKY…KSLFRQAISH (234 aa)). Residues Tyr1220 and 1245 to 1252 (GRTGSGKS) contribute to the ATP site. The tract at residues 1387–1481 (RALKQAFADC…TEEEVQETRL (95 aa)) is interaction with GORASP2. A lipid anchor (S-palmitoyl cysteine) is attached at Cys1396. 2 positions are modified to phosphoserine: Ser1445 and Ser1457. Positions 1453-1481 (HRNSSKYKSRPQIASLKEETEEEVQETRL) are disordered. The span at 1471 to 1481 (ETEEEVQETRL) shows a compositional bias: acidic residues. Residues 1479–1481 (TRL) carry the PDZ-binding motif.

It belongs to the ABC transporter superfamily. ABCC family. CFTR transporter (TC 3.A.1.202) subfamily. In terms of assembly, monomer; does not require oligomerization for channel activity. May form oligomers in the membrane. Interacts with SLC26A3, SLC26A6 and NHERF1. Interacts with SHANK2. Interacts with MYO6. Interacts (via C-terminus) with GOPC (via PDZ domain); this promotes CFTR internalization and thereby decreases channel activity. Interacts with SLC4A7 through NHERF1. Found in a complex with MYO5B and RAB11A. Interacts with ANO1. Interacts with SLC26A8. Interacts with AHCYL1; the interaction increases CFTR activity. Interacts with CSE1L. The core-glycosylated form interacts with GORASP2 (via PDZ GRASP-type 1 domain) in respone to ER stress. Interacts with MARCHF2; the interaction leads to CFTR ubiqtuitination and degradation. Interacts with ADGRG2. N-glycosylated. Post-translationally, phosphorylated; cAMP treatment promotes phosphorylation and activates the channel. Dephosphorylation decreases the ATPase activity (in vitro). Phosphorylation at PKA sites activates the channel. Phosphorylation at PKC sites enhances the response to phosphorylation by PKA. Phosphorylated by AMPK; this inhibits channel activity. In terms of processing, ubiquitinated, leading to its degradation in the lysosome. Deubiquitination by USP10 in early endosomes enhances its endocytic recycling to the cell membrane. Ubiquitinated by RNF185 during ER stress. Ubiquitinated by MARCHF2.

The protein localises to the apical cell membrane. Its subcellular location is the early endosome membrane. The protein resides in the cell membrane. It is found in the recycling endosome membrane. It localises to the endoplasmic reticulum membrane. The protein localises to the nucleus. It catalyses the reaction ATP + H2O + closed Cl(-) channel = ADP + phosphate + open Cl(-) channel.. The catalysed reaction is chloride(in) = chloride(out). The enzyme catalyses hydrogencarbonate(in) = hydrogencarbonate(out). It carries out the reaction ATP + H2O = ADP + phosphate + H(+). Its function is as follows. Epithelial ion channel that plays an important role in the regulation of epithelial ion and water transport and fluid homeostasis. Mediates the transport of chloride ions across the cell membrane. Possesses an intrinsic ATPase activity and utilizes ATP to gate its channel; the passive flow of anions through the channel is gated by cycles of ATP binding and hydrolysis by the ATP-binding domains. The ion channel is also permeable to HCO(3)(-); selectivity depends on the extracellular chloride concentration. Exerts its function also by modulating the activity of other ion channels and transporters. Contributes to the regulation of the pH and the ion content of the epithelial fluid layer. Modulates the activity of the epithelial sodium channel (ENaC) complex, in part by regulating the cell surface expression of the ENaC complex. May regulate bicarbonate secretion and salvage in epithelial cells by regulating the transporter SLC4A7. Can inhibit the chloride channel activity of ANO1. Plays a role in the chloride and bicarbonate homeostasis during sperm epididymal maturation and capacitation. The chain is Cystic fibrosis transmembrane conductance regulator from Callithrix jacchus (White-tufted-ear marmoset).